A 377-amino-acid polypeptide reads, in one-letter code: PqqA peptide cyclase (377 aa).

The region spanning 12–228 (FGIPLAVLLE…EAARERLKGQ (217 aa)) is the Radical SAM core domain. [4Fe-4S] cluster contacts are provided by Cys26, Cys30, and Cys33.

Belongs to the radical SAM superfamily. PqqE family. In terms of assembly, interacts with PqqD. The interaction is necessary for activity of PqqE. [4Fe-4S] cluster serves as cofactor.

The enzyme catalyses [PQQ precursor protein] + S-adenosyl-L-methionine = E-Y cross-linked-[PQQ precursor protein] + 5'-deoxyadenosine + L-methionine + H(+). It participates in cofactor biosynthesis; pyrroloquinoline quinone biosynthesis. In terms of biological role, catalyzes the cross-linking of a glutamate residue and a tyrosine residue in the PqqA protein as part of the biosynthesis of pyrroloquinoline quinone (PQQ). In Rhodopseudomonas palustris (strain ATCC BAA-98 / CGA009), this protein is PqqA peptide cyclase.